Here is a 565-residue protein sequence, read N- to C-terminus: Sulfite reductase [NADPH] hemoprotein beta-component (565 aa).

Cys429, Cys435, Cys474, and Cys478 together coordinate [4Fe-4S] cluster. Cys478 serves as a coordination point for siroheme.

The protein belongs to the nitrite and sulfite reductase 4Fe-4S domain family. Alpha(8)-beta(8). The alpha component is a flavoprotein, the beta component is a hemoprotein. Requires siroheme as cofactor. [4Fe-4S] cluster serves as cofactor.

The catalysed reaction is hydrogen sulfide + 3 NADP(+) + 3 H2O = sulfite + 3 NADPH + 4 H(+). Its pathway is sulfur metabolism; hydrogen sulfide biosynthesis; hydrogen sulfide from sulfite (NADPH route): step 1/1. Component of the sulfite reductase complex that catalyzes the 6-electron reduction of sulfite to sulfide. This is one of several activities required for the biosynthesis of L-cysteine from sulfate. The sequence is that of Sulfite reductase [NADPH] hemoprotein beta-component from Shewanella sp. (strain MR-7).